We begin with the raw amino-acid sequence, 189 residues long: GTP cyclohydrolase 1 (189 aa).

The Zn(2+) site is built by Cys79, His82, and Cys150.

Belongs to the GTP cyclohydrolase I family. As to quaternary structure, homomer.

The catalysed reaction is GTP + H2O = 7,8-dihydroneopterin 3'-triphosphate + formate + H(+). It participates in cofactor biosynthesis; 7,8-dihydroneopterin triphosphate biosynthesis; 7,8-dihydroneopterin triphosphate from GTP: step 1/1. This chain is GTP cyclohydrolase 1, found in Rickettsia peacockii (strain Rustic).